A 539-amino-acid chain; its full sequence is uncharacterized protein (539 aa).

Transmembrane regions (helical) follow at residues 4 to 22 (LVENQLLALVVIMTVGLLL), 27 to 46 (IFGFRLGVAAVLFVGLALST), 56 to 78 (LIYVVGLSLFVYTIGLEAGPGFF), 90 to 112 (ALTLGAIIATTALAWALITVLNI), and 155 to 177 (PVVAYSLAYPLGVLIVILSIAIF). RCK C-terminal domains are found at residues 187 to 269 (KEAE…AIGE) and 271 to 352 (IDGD…LLGD). 4 helical membrane passes run 360-382 (FNLLPLAAGLMIGVLVGMVEFPL), 422-444 (LALRQLGITLFLAAIGTSAGAGF), 453-475 (SLTIIGFGALLTLFISITVLFVG), and 516-538 (YTSVYPLAMIAKILAAQTLLFLL).

It belongs to the AAE transporter (TC 2.A.81) family.

It is found in the cell membrane. This is an uncharacterized protein from Corynebacterium glutamicum (strain ATCC 13032 / DSM 20300 / JCM 1318 / BCRC 11384 / CCUG 27702 / LMG 3730 / NBRC 12168 / NCIMB 10025 / NRRL B-2784 / 534).